We begin with the raw amino-acid sequence, 157 residues long: MNKVPMTGEGFASLKEELRWRQQEERPRIIEAISEARSHGDLSENAEYHAAKEAQSLNEGRVNELEDLIARAEVIDVTKLSGDKVKFGATVVLVDEDTEEKKTYQIVGDQEADVKSGRISISSPIARALIGKEVGDAIEVNAPGGARGYEIVQVQFI.

It belongs to the GreA/GreB family.

Functionally, necessary for efficient RNA polymerase transcription elongation past template-encoded arresting sites. The arresting sites in DNA have the property of trapping a certain fraction of elongating RNA polymerases that pass through, resulting in locked ternary complexes. Cleavage of the nascent transcript by cleavage factors such as GreA or GreB allows the resumption of elongation from the new 3'terminus. GreA releases sequences of 2 to 3 nucleotides. The chain is Transcription elongation factor GreA from Mesorhizobium japonicum (strain LMG 29417 / CECT 9101 / MAFF 303099) (Mesorhizobium loti (strain MAFF 303099)).